The following is a 267-amino-acid chain: Diphthine--ammonia ligase (267 aa).

Tyr-97 is subject to Phosphotyrosine.

It belongs to the Diphthine--ammonia ligase family.

It catalyses the reaction diphthine-[translation elongation factor 2] + NH4(+) + ATP = diphthamide-[translation elongation factor 2] + AMP + diphosphate + H(+). It participates in protein modification; peptidyl-diphthamide biosynthesis. In terms of biological role, amidase that may catalyze the last step of diphthamide biosynthesis using ammonium and ATP. Diphthamide biosynthesis consists in the conversion of an L-histidine residue in the translation elongation factor (EEF2) to diphthamide. The polypeptide is Diphthine--ammonia ligase (Homo sapiens (Human)).